We begin with the raw amino-acid sequence, 182 residues long: ATP synthase subunit delta (182 aa).

The protein belongs to the ATPase delta chain family. F-type ATPases have 2 components, F(1) - the catalytic core - and F(0) - the membrane proton channel. F(1) has five subunits: alpha(3), beta(3), gamma(1), delta(1), epsilon(1). F(0) has three main subunits: a(1), b(2) and c(10-14). The alpha and beta chains form an alternating ring which encloses part of the gamma chain. F(1) is attached to F(0) by a central stalk formed by the gamma and epsilon chains, while a peripheral stalk is formed by the delta and b chains.

It is found in the cell inner membrane. Its function is as follows. F(1)F(0) ATP synthase produces ATP from ADP in the presence of a proton or sodium gradient. F-type ATPases consist of two structural domains, F(1) containing the extramembraneous catalytic core and F(0) containing the membrane proton channel, linked together by a central stalk and a peripheral stalk. During catalysis, ATP synthesis in the catalytic domain of F(1) is coupled via a rotary mechanism of the central stalk subunits to proton translocation. In terms of biological role, this protein is part of the stalk that links CF(0) to CF(1). It either transmits conformational changes from CF(0) to CF(1) or is implicated in proton conduction. The sequence is that of ATP synthase subunit delta from Bdellovibrio bacteriovorus (strain ATCC 15356 / DSM 50701 / NCIMB 9529 / HD100).